The following is a 261-amino-acid chain: Glucose 1-dehydrogenase 1 (261 aa).

Residue Val11–Val35 coordinates NADP(+). Position 145 (Ser145) interacts with substrate. Catalysis depends on Tyr158, which acts as the Proton acceptor.

Belongs to the short-chain dehydrogenases/reductases (SDR) family. Homotetramer.

The catalysed reaction is D-glucose + NAD(+) = D-glucono-1,5-lactone + NADH + H(+). It carries out the reaction D-glucose + NADP(+) = D-glucono-1,5-lactone + NADPH + H(+). Functionally, may play some role in spore germination. This Priestia megaterium (Bacillus megaterium) protein is Glucose 1-dehydrogenase 1 (gdhI).